The chain runs to 253 residues: Triosephosphate isomerase (253 aa).

The substrate site is built by N12 and K14. Catalysis depends on H96, which acts as the Electrophile. E169 (proton acceptor) is an active-site residue.

The protein belongs to the triosephosphate isomerase family. In terms of assembly, homodimer.

The protein resides in the cytoplasm. The enzyme catalyses D-glyceraldehyde 3-phosphate = dihydroxyacetone phosphate. The protein operates within carbohydrate biosynthesis; gluconeogenesis. It functions in the pathway carbohydrate degradation; glycolysis; D-glyceraldehyde 3-phosphate from glycerone phosphate: step 1/1. Its function is as follows. Antigen to the host M.1 monoclonal antibody. This Schistosoma mansoni (Blood fluke) protein is Triosephosphate isomerase (TPI).